The following is a 108-amino-acid chain: uncharacterized protein (108 aa).

The helical transmembrane segment at 10–32 threads the bilayer; that stretch reads LQAPYILCTSFITLKIHNFFFFF.

It is found in the membrane. This is an uncharacterized protein from Saccharomyces cerevisiae (strain ATCC 204508 / S288c) (Baker's yeast).